Here is a 487-residue protein sequence, read N- to C-terminus: Chromosomal replication initiator protein DnaA (487 aa).

Residues 1–79 (MEKSKNIWSL…GYNNIVIVFT (79 aa)) form a domain I, interacts with DnaA modulators region. Positions 79–142 (TNQPPKTHSN…EEEPTNFKNP (64 aa)) are domain II. Residues 143–359 (FLKKRYTFEN…AAVTKLKAYI (217 aa)) are domain III, AAA+ region. ATP-binding residues include Gly-187, Gly-189, Lys-190, and Thr-191. The domain IV, binds dsDNA stretch occupies residues 360–487 (DLDNIEIDIE…TELMNKIKKN (128 aa)).

Belongs to the DnaA family. As to quaternary structure, oligomerizes as a right-handed, spiral filament on DNA at oriC.

Its subcellular location is the cytoplasm. In terms of biological role, plays an essential role in the initiation and regulation of chromosomal replication. ATP-DnaA binds to the origin of replication (oriC) to initiate formation of the DNA replication initiation complex once per cell cycle. Binds the DnaA box (a 9 base pair repeat at the origin) and separates the double-stranded (ds)DNA. Forms a right-handed helical filament on oriC DNA; dsDNA binds to the exterior of the filament while single-stranded (ss)DNA is stabiized in the filament's interior. The ATP-DnaA-oriC complex binds and stabilizes one strand of the AT-rich DNA unwinding element (DUE), permitting loading of DNA polymerase. After initiation quickly degrades to an ADP-DnaA complex that is not apt for DNA replication. Binds acidic phospholipids. The protein is Chromosomal replication initiator protein DnaA of Borreliella burgdorferi (strain ZS7) (Borrelia burgdorferi).